The chain runs to 186 residues: Chromosome-anchoring protein RacA (186 aa).

The H-T-H motif DNA-binding region spans 3–23 (TADAANELGVSTKTVQRWVKQ). Residues 90 to 170 (ERLEERLQRF…NRREKDTAVR (81 aa)) adopt a coiled-coil conformation. A disordered region spans residues 158 to 186 (ESMNRREKDTAVRREEKKPKSKLKSIFSF). Residues 160-175 (MNRREKDTAVRREEKK) are compositionally biased toward basic and acidic residues.

This sequence belongs to the RacA family.

It is found in the cytoplasm. In terms of biological role, required for the formation of axial filaments and for anchoring the origin regions at the cell poles in sporulating cells, thus ensuring proper chromosome segregation in the prespore. Binds in a dispersed manner throughout the chromosome but preferentially to sites clustered in the origin portion of the chromosome, causing condensation of the chromosome and its remodeling into an elongated, anchored structure. The protein is Chromosome-anchoring protein RacA of Bacillus licheniformis (strain ATCC 14580 / DSM 13 / JCM 2505 / CCUG 7422 / NBRC 12200 / NCIMB 9375 / NCTC 10341 / NRRL NRS-1264 / Gibson 46).